Reading from the N-terminus, the 202-residue chain is Large ribosomal subunit protein bL25 (202 aa).

Belongs to the bacterial ribosomal protein bL25 family. CTC subfamily. Part of the 50S ribosomal subunit; part of the 5S rRNA/L5/L18/L25 subcomplex. Contacts the 5S rRNA. Binds to the 5S rRNA independently of L5 and L18.

Functionally, this is one of the proteins that binds to the 5S RNA in the ribosome where it forms part of the central protuberance. This chain is Large ribosomal subunit protein bL25, found in Paramagnetospirillum magneticum (strain ATCC 700264 / AMB-1) (Magnetospirillum magneticum).